The primary structure comprises 227 residues: PKHD-type hydroxylase Patl_2273 (227 aa).

The 101-residue stretch at 78-178 (KIYPPKFNRY…RTASFFWIES (101 aa)) folds into the Fe2OG dioxygenase domain. 3 residues coordinate Fe cation: His-96, Asp-98, and His-159. Arg-169 lines the 2-oxoglutarate pocket.

The cofactor is Fe(2+). L-ascorbate is required as a cofactor.

The polypeptide is PKHD-type hydroxylase Patl_2273 (Pseudoalteromonas atlantica (strain T6c / ATCC BAA-1087)).